A 344-amino-acid polypeptide reads, in one-letter code: Lipopolysaccharide heptosyltransferase 3 (344 aa).

It belongs to the glycosyltransferase 9 family.

The enzyme catalyses an L-alpha-D-Hep-(1-&gt;3)-4-O-phospho-L-alpha-D-Hep-(1-&gt;5)-[alpha-Kdo-(2-&gt;4)]-alpha-Kdo-(2-&gt;6)-lipid A + ADP-L-glycero-beta-D-manno-heptose = an L-alpha-D-Hep-(1-&gt;7)-L-alpha-D-Hep-(1-&gt;3)-4-O-phospho-L-alpha-D-Hep-(1-&gt;5)-[alpha-Kdo-(2-&gt;4)]-alpha-Kdo-(2-&gt;6)-lipid A + ADP + H(+). It carries out the reaction L-alpha-D-Hep-(1-&gt;3)-4-O-phospho-L-alpha-D-Hep-(1-&gt;5)-[alpha-Kdo-(2-&gt;4)]-alpha-Kdo-(2-&gt;6)-lipid A (E. coli) + ADP-L-glycero-beta-D-manno-heptose = L-alpha-D-Hep-(1-&gt;7)-L-alpha-D-Hep-(1-&gt;3)-4-O-phospho-L-alpha-D-Hep-(1-&gt;5)-[alpha-Kdo-(2-&gt;4)]-alpha-Kdo-(2-&gt;6)-lipid A (E. coli) + ADP + H(+). Its pathway is bacterial outer membrane biogenesis; LPS core biosynthesis. Functionally, glycosyltransferase involved in the biosynthesis of the core oligosaccharide region of lipopolysaccharide (LPS). Catalyzes the addition of the third heptose unit (HepIII) to the second heptose unit (HepII) of the phospho-Hep2-Kdo2-lipid A module. This chain is Lipopolysaccharide heptosyltransferase 3, found in Escherichia coli (strain K12).